Reading from the N-terminus, the 537-residue chain is Cytochrome P450 4F6 (537 aa).

C468 lines the heme pocket.

It belongs to the cytochrome P450 family. The cofactor is heme. In terms of tissue distribution, high expression in liver and kidney. Lower expression in brain.

It is found in the endoplasmic reticulum membrane. The protein resides in the microsome membrane. The catalysed reaction is an organic molecule + reduced [NADPH--hemoprotein reductase] + O2 = an alcohol + oxidized [NADPH--hemoprotein reductase] + H2O + H(+). The sequence is that of Cytochrome P450 4F6 (Cyp4f6) from Rattus norvegicus (Rat).